Reading from the N-terminus, the 270-residue chain is Hydroxyethylthiazole kinase (270 aa).

Met46 provides a ligand contact to substrate. Arg120 and Thr166 together coordinate ATP. Gly193 is a substrate binding site.

It belongs to the Thz kinase family. Mg(2+) serves as cofactor.

The enzyme catalyses 5-(2-hydroxyethyl)-4-methylthiazole + ATP = 4-methyl-5-(2-phosphooxyethyl)-thiazole + ADP + H(+). The protein operates within cofactor biosynthesis; thiamine diphosphate biosynthesis; 4-methyl-5-(2-phosphoethyl)-thiazole from 5-(2-hydroxyethyl)-4-methylthiazole: step 1/1. Its function is as follows. Catalyzes the phosphorylation of the hydroxyl group of 4-methyl-5-beta-hydroxyethylthiazole (THZ). The chain is Hydroxyethylthiazole kinase from Herpetosiphon aurantiacus (strain ATCC 23779 / DSM 785 / 114-95).